Reading from the N-terminus, the 142-residue chain is SPbeta prophage-derived deoxyuridine 5'-triphosphate nucleotidohydrolase YosS (142 aa).

Residues serine 62 and asparagine 74 each coordinate dUMP. The active-site Proton acceptor is aspartate 80. Tyrosine 83 and phenylalanine 91 together coordinate dUMP.

Belongs to the dUTPase family. In terms of assembly, homotrimer. It depends on Mg(2+) as a cofactor.

The catalysed reaction is dUTP + H2O = dUMP + diphosphate + H(+). It functions in the pathway pyrimidine metabolism; dUMP biosynthesis; dUMP from dCTP (dUTP route): step 2/2. Involved in nucleotide metabolism: produces dUMP, the immediate precursor of thymidine nucleotides and decreases the intracellular concentration of dUTP, so that uracil cannot be incorporated into DNA. The Ser-62 side chain changes its position upon ligand-binding to make contacts with the nucleotide phosphates. This chain is SPbeta prophage-derived deoxyuridine 5'-triphosphate nucleotidohydrolase YosS, found in Bacillus subtilis (strain 168).